A 407-amino-acid chain; its full sequence is Bifunctional enzyme IspD/IspF (407 aa).

A 2-C-methyl-D-erythritol 4-phosphate cytidylyltransferase region spans residues 1-247 (MVHIQADGAR…RLSHNALPDV (247 aa)). Residues 248-407 (RTGNGYDVHQ…ATVVFQGKPQ (160 aa)) are 2-C-methyl-D-erythritol 2,4-cyclodiphosphate synthase. Asp254 and His256 together coordinate a divalent metal cation. Residues 254 to 256 (DVH) and 280 to 281 (HS) each bind 4-CDP-2-C-methyl-D-erythritol 2-phosphate. His288 provides a ligand contact to a divalent metal cation. 4-CDP-2-C-methyl-D-erythritol 2-phosphate is bound by residues 302–304 (DIG), 378–381 (TTNE), Phe385, and Arg388.

The protein in the N-terminal section; belongs to the IspD/TarI cytidylyltransferase family. IspD subfamily. In the C-terminal section; belongs to the IspF family. Requires a divalent metal cation as cofactor.

It catalyses the reaction 2-C-methyl-D-erythritol 4-phosphate + CTP + H(+) = 4-CDP-2-C-methyl-D-erythritol + diphosphate. The catalysed reaction is 4-CDP-2-C-methyl-D-erythritol 2-phosphate = 2-C-methyl-D-erythritol 2,4-cyclic diphosphate + CMP. Its pathway is isoprenoid biosynthesis; isopentenyl diphosphate biosynthesis via DXP pathway; isopentenyl diphosphate from 1-deoxy-D-xylulose 5-phosphate: step 2/6. It participates in isoprenoid biosynthesis; isopentenyl diphosphate biosynthesis via DXP pathway; isopentenyl diphosphate from 1-deoxy-D-xylulose 5-phosphate: step 4/6. Its function is as follows. Bifunctional enzyme that catalyzes the formation of 4-diphosphocytidyl-2-C-methyl-D-erythritol from CTP and 2-C-methyl-D-erythritol 4-phosphate (MEP) (IspD), and catalyzes the conversion of 4-diphosphocytidyl-2-C-methyl-D-erythritol 2-phosphate (CDP-ME2P) to 2-C-methyl-D-erythritol 2,4-cyclodiphosphate (ME-CPP) with a corresponding release of cytidine 5-monophosphate (CMP) (IspF). The chain is Bifunctional enzyme IspD/IspF from Allorhizobium ampelinum (strain ATCC BAA-846 / DSM 112012 / S4) (Agrobacterium vitis (strain S4)).